Reading from the N-terminus, the 235-residue chain is Phosphoribosylaminoimidazole-succinocarboxamide synthase (235 aa).

Belongs to the SAICAR synthetase family.

It catalyses the reaction 5-amino-1-(5-phospho-D-ribosyl)imidazole-4-carboxylate + L-aspartate + ATP = (2S)-2-[5-amino-1-(5-phospho-beta-D-ribosyl)imidazole-4-carboxamido]succinate + ADP + phosphate + 2 H(+). Its pathway is purine metabolism; IMP biosynthesis via de novo pathway; 5-amino-1-(5-phospho-D-ribosyl)imidazole-4-carboxamide from 5-amino-1-(5-phospho-D-ribosyl)imidazole-4-carboxylate: step 1/2. This chain is Phosphoribosylaminoimidazole-succinocarboxamide synthase, found in Clostridium novyi (strain NT).